Reading from the N-terminus, the 129-residue chain is uncharacterized protein (129 aa).

3 helical membrane-spanning segments follow: residues 22-42, 55-75, and 88-108; these read LASS…FFFF, VGSF…FFFF, and LPFT…FFFF.

The protein localises to the membrane. This is an uncharacterized protein from Saccharomyces cerevisiae (strain ATCC 204508 / S288c) (Baker's yeast).